We begin with the raw amino-acid sequence, 557 residues long: Enhancer of polycomb-like protein 1 (557 aa).

2 disordered regions span residues 323–349 and 424–449; these read VKPA…RPQP and QSHN…TYST. Residues 327–337 are compositionally biased toward pro residues; sequence APVPTPAPPVK. Positions 429 to 441 are enriched in low complexity; it reads LSIPSSTPSTPLS.

It belongs to the enhancer of polycomb family. Component of the NuA4 histone acetyltransferase complex.

It localises to the nucleus. Component of the NuA4 histone acetyltransferase complex which is involved in transcriptional activation of selected genes principally by acetylation of nucleosomal histone H4 and H2A. The NuA4 complex is also involved in DNA repair. Involved in gene silencing by neighboring heterochromatin, blockage of the silencing spreading along the chromosome, and required for cell cycle progression through G2/M. The protein is Enhancer of polycomb-like protein 1 (epl1) of Schizosaccharomyces pombe (strain 972 / ATCC 24843) (Fission yeast).